The following is a 247-amino-acid chain: Protein GrpE (247 aa).

Basic and acidic residues predominate over residues 31 to 49 (QKEETKTTNKDNQKEDETV). A disordered region spans residues 31–79 (QKEETKTTNKDNQKEDETVKNQSNQSNQSNQTKQTNTKQQKHQPKENSH). Positions 50 to 68 (KNQSNQSNQSNQTKQTNTK) are enriched in low complexity.

It belongs to the GrpE family. In terms of assembly, homodimer.

It is found in the cytoplasm. Participates actively in the response to hyperosmotic and heat shock by preventing the aggregation of stress-denatured proteins, in association with DnaK and GrpE. It is the nucleotide exchange factor for DnaK and may function as a thermosensor. Unfolded proteins bind initially to DnaJ; upon interaction with the DnaJ-bound protein, DnaK hydrolyzes its bound ATP, resulting in the formation of a stable complex. GrpE releases ADP from DnaK; ATP binding to DnaK triggers the release of the substrate protein, thus completing the reaction cycle. Several rounds of ATP-dependent interactions between DnaJ, DnaK and GrpE are required for fully efficient folding. The sequence is that of Protein GrpE from Onion yellows phytoplasma (strain OY-M).